The following is a 476-amino-acid chain: tRNA(Ile)-lysidine synthase (476 aa).

Residue 30 to 35 (SGGPDS) participates in ATP binding.

It belongs to the tRNA(Ile)-lysidine synthase family.

Its subcellular location is the cytoplasm. It carries out the reaction cytidine(34) in tRNA(Ile2) + L-lysine + ATP = lysidine(34) in tRNA(Ile2) + AMP + diphosphate + H(+). Its function is as follows. Ligates lysine onto the cytidine present at position 34 of the AUA codon-specific tRNA(Ile) that contains the anticodon CAU, in an ATP-dependent manner. Cytidine is converted to lysidine, thus changing the amino acid specificity of the tRNA from methionine to isoleucine. The protein is tRNA(Ile)-lysidine synthase of Bacillus cereus (strain ZK / E33L).